Reading from the N-terminus, the 373-residue chain is Dimethylallyltryptophan synthase CymD (373 aa).

3 residues coordinate L-tryptophan: Asp-55, Val-56, and Glu-64. Glu-64 (nucleophile) is an active-site residue. Gln-77, Lys-146, Trp-148, Arg-205, and Lys-207 together coordinate dimethylallyl diphosphate. Position 211 (Arg-211) interacts with L-tryptophan. Tyr-274 serves as a coordination point for dimethylallyl diphosphate. Tyr-326 lines the L-tryptophan pocket. Positions 337, 339, and 341 each coordinate dimethylallyl diphosphate. Residues 346–373 (MHDVTPPPLGVSQQHHLSGQTTARGRTE) form the FtsK domain.

Functionally, dimethylallyltryptophan synthase; part of the gene cluster that mediates the biosynthesis of cyclic heptapeptides, known as cyclomarins and also of cyclic dipeptides, called cyclomarazines, which have both antimicrobial and cytotoxic effects. Catalyzes the reverse N-prenylation of monomeric L-tryptophan with dimethylallyl diphosphate (DMAPP) to form N-(1,1-dimethylallyl)-tryptophan (r-N-DMAT). The formation of r-N-DMAT appears to proceed via the deprotonation of the indole nitrogen of tryptophan, which facilitates a nucleophilic attack on the carbocation that is forming on the dimethylallyl group as the diphosphate dissociates. The N-(1,1-dimethylallyl)-tryptophan produced by CymD is combined with a range of standard and nonproteinogenic amino acid substrates to synthesize the peptides, a process that is probably catalyzed by the non-canonical nonribosomal peptide synthetase (NRPS), CymA. Other proteins in the cluster catalyze further modifications of the peptides including CymV which catalyzes the oxidation of olefinic cyclomarins and cyclomarazines to their respective epoxide derivatives. Utilizes only DMAPP as the prenyl donor and has no requirement for divalent cations. The polypeptide is Dimethylallyltryptophan synthase CymD (Salinispora arenicola (strain CNS-205)).